Consider the following 754-residue polypeptide: 1,4-alpha-glucan branching enzyme GlgB (754 aa).

Aspartate 431 serves as the catalytic Nucleophile. Glutamate 484 (proton donor) is an active-site residue.

Belongs to the glycosyl hydrolase 13 family. GlgB subfamily. Monomer.

It catalyses the reaction Transfers a segment of a (1-&gt;4)-alpha-D-glucan chain to a primary hydroxy group in a similar glucan chain.. It functions in the pathway glycan biosynthesis; glycogen biosynthesis. Functionally, catalyzes the formation of the alpha-1,6-glucosidic linkages in glycogen by scission of a 1,4-alpha-linked oligosaccharide from growing alpha-1,4-glucan chains and the subsequent attachment of the oligosaccharide to the alpha-1,6 position. This chain is 1,4-alpha-glucan branching enzyme GlgB, found in Prochlorococcus marinus subsp. pastoris (strain CCMP1986 / NIES-2087 / MED4).